A 321-amino-acid chain; its full sequence is Queuosine 5'-phosphate N-glycosylase/hydrolase (321 aa).

Queuine is bound by residues F227, D229, and D296. D229 serves as the catalytic Nucleophile or transition state stabilizer.

The protein belongs to the QNG1 protein family.

The catalysed reaction is queuosine 5'-phosphate + H2O = queuine + D-ribose 5-phosphate. Functionally, catalyzes the hydrolysis of queuosine 5'-phosphate, releasing the nucleobase queuine (q). Is required for salvage of queuine from exogenous queuosine (Q) that is imported and then converted to queuosine 5'-phosphate intracellularly. The polypeptide is Queuosine 5'-phosphate N-glycosylase/hydrolase (Dictyostelium discoideum (Social amoeba)).